A 383-amino-acid polypeptide reads, in one-letter code: 8-amino-7-oxononanoate synthase (383 aa).

Residue arginine 23 coordinates substrate. Position 110–111 (110–111 (GF)) interacts with pyridoxal 5'-phosphate. Histidine 135 contributes to the substrate binding site. Pyridoxal 5'-phosphate contacts are provided by serine 181, histidine 209, and threonine 235. Position 238 is an N6-(pyridoxal phosphate)lysine (lysine 238). Threonine 351 is a binding site for substrate.

Belongs to the class-II pyridoxal-phosphate-dependent aminotransferase family. BioF subfamily. As to quaternary structure, homodimer. Pyridoxal 5'-phosphate is required as a cofactor.

The catalysed reaction is 6-carboxyhexanoyl-[ACP] + L-alanine + H(+) = (8S)-8-amino-7-oxononanoate + holo-[ACP] + CO2. It participates in cofactor biosynthesis; biotin biosynthesis. In terms of biological role, catalyzes the decarboxylative condensation of pimeloyl-[acyl-carrier protein] and L-alanine to produce 8-amino-7-oxononanoate (AON), [acyl-carrier protein], and carbon dioxide. In Aliivibrio fischeri (strain MJ11) (Vibrio fischeri), this protein is 8-amino-7-oxononanoate synthase.